A 437-amino-acid chain; its full sequence is MEINAQKLNEANATVEAKIAKQDVEKKEEKIAKELAKTMNIPGFRKGKVPPAVIKKRYGDKLAQDAEAELVREALDQALEELGIEKEAMLGEPRFAKYEKGEEVIEMVLEIGVRPNIDITGYEEVIPEYEEPQVSDEEVEKRIEELADAMAQFKEIEEDRPAKEGDLVVIDFKGTLEDGSEIEGGSAQNFELRLGSGQFIPGFEEQVEGMKKGETKTIEVTFPEDYPNKELAGKKANFEVTLHTIKEKEKINIDDELAKKMLQKEDATLDELKEEVRKQLKSEKLSKLYNEELKPKLVEALVEKFEFDLPKNIVDQEIDVQLNNKAAQMSEEEIKELRENKEKLEELRKEIEPEAQKSVKATFIVDALAKAEGINVADQEVVQTIYYEALQMGRNPQEILKAYEEQGLLPAIKMAMIEDRLLTHLLSKKNEKQEENA.

Residues 165-251 form the PPIase FKBP-type domain; that stretch reads GDLVVIDFKG…LHTIKEKEKI (87 aa).

This sequence belongs to the FKBP-type PPIase family. Tig subfamily.

It localises to the cytoplasm. The enzyme catalyses [protein]-peptidylproline (omega=180) = [protein]-peptidylproline (omega=0). Functionally, involved in protein export. Acts as a chaperone by maintaining the newly synthesized protein in an open conformation. Functions as a peptidyl-prolyl cis-trans isomerase. The chain is Trigger factor from Nitratiruptor sp. (strain SB155-2).